A 270-amino-acid polypeptide reads, in one-letter code: UPF0354 protein BCG9842_B0431 (270 aa).

This sequence belongs to the UPF0354 family.

The chain is UPF0354 protein BCG9842_B0431 from Bacillus cereus (strain G9842).